The sequence spans 871 residues: Scavenger receptor class F member 2 (871 aa).

The disordered stretch occupies residues 1–20 (MEGAGPRGAGPARRRGAGGP). The first 43 residues, 1-43 (MEGAGPRGAGPARRRGAGGPPSPLLPSLLLLLLLWMLPDTVAP), serve as a signal peptide directing secretion. The Extracellular portion of the chain corresponds to 44-441 (QELNPRGRNV…ACHLETNQRK (398 aa)). EGF-like domains are found at residues 71–110 (QGDE…ANCD), 122–153 (CKEL…ARCE), 148–182 (WGAR…AQCA), 183–212 (SACY…RSCN), 213–241 (NQCA…ARCD), and 236–270 (FGAR…KYCR). Intrachain disulfides connect C75-C86, C80-C98, C100-C109, C126-C134, C128-C141, C143-C152, C156-C163, C158-C170, C172-C181, C185-C193, C187-C200, C202-C211, C215-C222, C217-C229, C231-C240, C244-C251, C246-C258, and C260-C269. N-linked (GlcNAc...) asparagine glycosylation occurs at N83. N310 and N365 each carry an N-linked (GlcNAc...) asparagine glycan. An EGF-like 7 domain is found at 372-403 (CAFVCADCGSGHCDFQSGRCLCSPGVHGPHCN). 3 disulfides stabilise this stretch: C376–C384, C379–C391, and C393–C402. N403 is a glycosylation site (N-linked (GlcNAc...) asparagine). The helical transmembrane segment at 442-462 (GVMGAGALLVLLVCLLLSLLG) threads the bilayer. The Cytoplasmic segment spans residues 463–871 (CCCACRGKDP…ELGRAGAPTL (409 aa)). S551 bears the Phosphoserine mark. A compositionally biased stretch (basic and acidic residues) spans 570 to 579 (EAPAESRDPE). Residues 570-871 (EAPAESRDPE…ELGRAGAPTL (302 aa)) are disordered. A Phosphoserine modification is found at S613. Position 628 is a phosphotyrosine (Y628). Residues 632-643 (ARREARPARARG) show a composition bias toward basic and acidic residues. Phosphoserine is present on residues S651, S653, S710, S718, and S742. A compositionally biased stretch (basic and acidic residues) spans 705-725 (TPSDKSAHTVEHGSPRTRDPT). Residues 821–831 (PPATETPGPEK) are compositionally biased toward low complexity. A compositionally biased stretch (basic residues) spans 844-856 (KKTPIQKPPRKKS). The segment covering 861-871 (GELGRAGAPTL) has biased composition (low complexity).

In terms of assembly, homophilic and heterophilic interaction via its extracellular domain. Interacts with SCARF1. The heterophilic interaction with SCARF1, which is stronger than the homophilic interaction with itself, is suppressed by the presence of SCARF1 ligand such as Ac-LDL. As to expression, predominantly expressed in endothelial cells. Expressed in heart, placenta, lung, kidney, spleen, small intestine and ovary.

It is found in the membrane. Functionally, probable adhesion protein, which mediates homophilic and heterophilic interactions. In contrast to SCARF1, it poorly mediates the binding and degradation of acetylated low density lipoprotein (Ac-LDL). The sequence is that of Scavenger receptor class F member 2 (SCARF2) from Homo sapiens (Human).